The primary structure comprises 373 residues: UBX domain-containing protein 1 (373 aa).

2 disordered regions span residues 39–179 and 236–293; these read VTEF…QIPR and IKQH…VDES. Positions 49 to 59 are enriched in polar residues; it reads TAGSSEPTGQP. 2 stretches are compositionally biased toward low complexity: residues 60–71 and 85–94; these read SAKSSSSTPRES and LGDLASGAAD. A compositionally biased stretch (acidic residues) spans 95–104; it reads SSDDDDDENQ. The segment covering 121–132 has biased composition (basic and acidic residues); sequence DDLKKKIIEKAR. An SEP domain is found at 185-258; it reads LHFWADGFSV…KYQPFAGKGQ (74 aa). The UBX domain occupies 292-369; that stretch reads ESQPVVTLQI…PEFKRGGVVV (78 aa).

In terms of biological role, involved in CDC48-dependent protein degradation through the ubiquitin/proteasome pathway. This Emericella nidulans (strain FGSC A4 / ATCC 38163 / CBS 112.46 / NRRL 194 / M139) (Aspergillus nidulans) protein is UBX domain-containing protein 1 (ubx1).